The following is a 691-amino-acid chain: DNA-directed RNA polymerase subunit beta' (691 aa).

Cysteine 76, cysteine 78, cysteine 94, and cysteine 97 together coordinate Zn(2+). Mg(2+)-binding residues include aspartate 496, aspartate 498, and aspartate 500.

It belongs to the RNA polymerase beta' chain family. RpoC1 subfamily. It depends on Mg(2+) as a cofactor. Zn(2+) serves as cofactor.

The protein localises to the plastid. The catalysed reaction is RNA(n) + a ribonucleoside 5'-triphosphate = RNA(n+1) + diphosphate. Its function is as follows. DNA-dependent RNA polymerase catalyzes the transcription of DNA into RNA using the four ribonucleoside triphosphates as substrates. This Cuscuta exaltata (Tall dodder) protein is DNA-directed RNA polymerase subunit beta'.